A 387-amino-acid chain; its full sequence is EARP-interacting protein homolog (387 aa).

WD repeat units lie at residues 132–172 (TAHG…TKSV), 182–222 (KGQL…QIYC), 226–266 (AHGQ…EPVK), and 270–310 (EHSH…SEPF). The disordered stretch occupies residues 311–339 (GHLVDDEDLSDQEDNPQEEKTKEPLQDSI). The span at 315–326 (DDEDLSDQEDNP) shows a compositional bias: acidic residues. The stretch at 345–385 (EHEDSVYAVEWSSADPWLFASLSYDGRLVINRVPRALKYNI) is one WD 5 repeat.

This sequence belongs to the WD repeat EIPR1 family.

It localises to the golgi apparatus. Its subcellular location is the trans-Golgi network. In terms of biological role, may act as a component of endosomal retrieval machinery that is involved in protein transport from early endosomes to either recycling endosomes or the trans-Golgi network. In Xenopus laevis (African clawed frog), this protein is EARP-interacting protein homolog.